A 218-amino-acid chain; its full sequence is Capsid protein (218 aa).

An N-acetylmethionine; by host modification is found at Met-1. Residues 1–10 (MDKSESTSAG) show a composition bias toward low complexity. The tract at residues 1-30 (MDKSESTSAGRNRRRRLRRGSRSASSSSDA) is disordered. Positions 11–21 (RNRRRRLRRGS) are enriched in basic residues.

It belongs to the cucumovirus capsid protein family.

The protein localises to the virion. Its function is as follows. Capsid protein. Probably binds RNA and plays a role in packaging. The polypeptide is Capsid protein (Cucumber mosaic virus (strain Y) (CMV)).